Reading from the N-terminus, the 1364-residue chain is Pleckstrin homology domain-containing family H member 1 (1364 aa).

Positions 28–169 (FRLQASKIRE…VGSLQDALEA (142 aa)) form a coiled coil. Disordered regions lie at residues 184 to 266 (GAAE…SPPH), 296 to 321 (GTKT…PGTP), 356 to 395 (LHPS…ESPK), 487 to 529 (PFMD…IKRG), and 546 to 568 (DACS…SSYS). Polar residues predominate over residues 237–246 (EDSSSSTVHS). Over residues 364-379 (LESRARSREEPEKMEM) the composition is skewed to basic and acidic residues. Residues 509–520 (VPSSESRKTSGL) show a composition bias toward polar residues. 2 consecutive PH domains span residues 578-672 (SLEK…SLLK) and 687-796 (KPTV…VAAG). At serine 745 the chain carries Phosphoserine. Residues 832–986 (YSKDGLYASL…PSRMEVVSIL (155 aa)) enclose the MyTH4 domain. An FERM domain is found at 997–1333 (FSIPVHFTNG…NHCTTTVNPP (337 aa)).

This Homo sapiens (Human) protein is Pleckstrin homology domain-containing family H member 1 (PLEKHH1).